We begin with the raw amino-acid sequence, 412 residues long: MATSRLPAVPEETTILMAKEELEALRTAFESGDIPQAASRLRELLANSETTRLEVGVTGESGAGKSSLINALRGLGAEDPGAALTGVVETTMQPSPYPHPQFPDVTLWDLPGAGSPGCSADKYLKQVDFGRYDFFLLVSPRRCGAVELPPSLLRSCARGRSFTLCAPRWTRIWRPPAARGPRVSARLQLLQEIRDHCTERLRVAGVNDPRIFLVSNLSPTRYDFPMLVTTWEHDLPAHRRHAGLLSLPDISLEALQKKKDMLQEQVLKTALVSGVIQALPVPGLAAAYDDALLIRSLRGYHRSFGLDDDSLAKLAEQVGKQAGDLRSVIRSPLANEVSPETVLRLYSQSSDGAMRVARAFERGIPVSARWWPGVSASARSTPCSRAVSMRWLRTPNASASKPWRKMSPRGVR.

The 184-residue stretch at 51–234 folds into the IRG-type G domain; it reads TRLEVGVTGE…PMLVTTWEHD (184 aa). GTP-binding positions include 60-67, 85-89, and 215-217; these read ESGAGKSS, TGVVE, and SNL. Phosphoserine occurs at positions 246 and 303.

This sequence belongs to the TRAFAC class dynamin-like GTPase superfamily. IRG family. In terms of assembly, interacts with PLIN2/ADRP and COX4I1/COXIV. Expressed in spermatozoa tails from the testis and epididymis, where it may be a component of the fibrous sheath (at protein level).

Its subcellular location is the cell projection. The protein resides in the cilium. It localises to the flagellum. It is found in the lipid droplet. The catalysed reaction is GTP + H2O = GDP + phosphate + H(+). Its function is as follows. Required for sperm motility and therefore male fertility, via positive regulation of spermatozoa fibrous sheath formation. This chain is Interferon-inducible GTPase 5, found in Mus musculus (Mouse).